The following is a 34-amino-acid chain: MLQVRASPTWGGGTYKKAVLVSLCRYSTAVGAPH.

This is an uncharacterized protein from Acidianus two-tailed virus (ATV).